Consider the following 265-residue polypeptide: uncharacterized protein (265 aa).

The a divalent metal cation site is built by histidine 7, histidine 9, glutamate 95, histidine 131, histidine 156, and aspartate 206.

The protein belongs to the metallo-dependent hydrolases superfamily. TatD-type hydrolase family. A divalent metal cation is required as a cofactor.

This is an uncharacterized protein from Buchnera aphidicola subsp. Baizongia pistaciae (strain Bp).